A 351-amino-acid chain; its full sequence is Peptide chain release factor 1 (351 aa).

An N5-methylglutamine modification is found at glutamine 229.

The protein belongs to the prokaryotic/mitochondrial release factor family. Post-translationally, methylated by PrmC. Methylation increases the termination efficiency of RF1.

Its subcellular location is the cytoplasm. Functionally, peptide chain release factor 1 directs the termination of translation in response to the peptide chain termination codons UAG and UAA. The chain is Peptide chain release factor 1 from Cereibacter sphaeroides (strain ATCC 17025 / ATH 2.4.3) (Rhodobacter sphaeroides).